Here is a 617-residue protein sequence, read N- to C-terminus: Pentatricopeptide repeat-containing protein At4g18520, chloroplastic (617 aa).

Residues 1-19 (MFSLSLIQPRLRISEIPVT) constitute a chloroplast transit peptide. PPR repeat units follow at residues 116 to 146 (VIYF…MPEK), 147 to 181 (NTVT…GIRF), 183 to 217 (NERM…GVGN), 222 to 247 (SSLV…MEEK), 248 to 282 (DVIS…WFLP), 283 to 317 (NEFT…MIKT), 318 to 348 (DVFV…MSNR), 349 to 383 (NTVT…HLIA), 384 to 418 (NNLT…SIEK), 419 to 449 (NVYI…LPSR), 450 to 484 (DVVS…GVEP), 485 to 519 (NPFT…HALS), 520 to 550 (NVFV…MPEK), and 551 to 585 (NLVS…GFEV).

It belongs to the PPR family. PCMP-A subfamily. As to quaternary structure, interacts with MORF8/RIP1, MORF2/RIP2 and MORF9/RIP9. In terms of tissue distribution, expressed specifically in aerial greening tissues, such as cotyledons, rosette leaves, cauline leaves, stems, sepals, stamens, carpels and siliques.

The protein localises to the plastid. It is found in the chloroplast. Functionally, required for proper chloroplast development. Involved in the regulation of plastid gene expression probably through regulation of plastid-encoded polymerase (PEP) dependent chloroplast transcription. Required for RNA editing of several chloroplastic transcripts, especially accD transcripts. Required for processing of the chloroplastic rpoA pre-mRNA. Required for the monocistronic rpoA transcript processing from the rpl23-rpl2-rps19-rpl22-rps3-rpl16-rpl14-rps8-rpl36-rps11-rpoA polycistron. Binds the intergenic sequence of rps11-rpoA for rpoA monocistronic RNA cleavage. The protein is Pentatricopeptide repeat-containing protein At4g18520, chloroplastic (PCMP-A2) of Arabidopsis thaliana (Mouse-ear cress).